Reading from the N-terminus, the 91-residue chain is Cell division protein FtsB (91 aa).

Over 1-3 (MKW) the chain is Cytoplasmic. Residues 4 to 21 (LVAVLVVFVAMFQYRLWV) form a helical membrane-spanning segment. The Periplasmic portion of the chain corresponds to 22-91 (GEGSIADVVR…ETFFMIIDDQ (70 aa)). A coiled-coil region spans residues 23 to 63 (EGSIADVVRLEREIARQEADNERLRERNKQLAAEVDALKTG).

Belongs to the FtsB family. As to quaternary structure, part of a complex composed of FtsB, FtsL and FtsQ.

It is found in the cell inner membrane. Essential cell division protein. May link together the upstream cell division proteins, which are predominantly cytoplasmic, with the downstream cell division proteins, which are predominantly periplasmic. This Teredinibacter turnerae (strain ATCC 39867 / T7901) protein is Cell division protein FtsB.